Reading from the N-terminus, the 353-residue chain is UPF0283 membrane protein YcjF (353 aa).

Residues 1–19 (MSEPLKPRIDFAEPLKEEP) show a composition bias toward basic and acidic residues. Positions 1-35 (MSEPLKPRIDFAEPLKEEPTSAFKAQQTFSEAESR) are disordered. The next 3 helical transmembrane spans lie at 70–90 (MVMGGLALFGASVVGQGVQWT), 100–120 (VALGGCAAGALIIGAGVGSVV), and 213–233 (ESTLMIAVSSLALVDMAFIAW).

This sequence belongs to the UPF0283 family.

It localises to the cell inner membrane. The protein is UPF0283 membrane protein YcjF of Salmonella gallinarum (strain 287/91 / NCTC 13346).